Consider the following 386-residue polypeptide: Galactokinase (386 aa).

Glu-35 to Asp-38 contacts substrate. Residues Ser-69 and Gly-125–Ser-131 contribute to the ATP site. Mg(2+) is bound by residues Ser-131 and Glu-163. Asp-175 (proton acceptor) is an active-site residue. Tyr-224 provides a ligand contact to substrate.

This sequence belongs to the GHMP kinase family. GalK subfamily.

The protein resides in the cytoplasm. The enzyme catalyses alpha-D-galactose + ATP = alpha-D-galactose 1-phosphate + ADP + H(+). It participates in carbohydrate metabolism; galactose metabolism. Functionally, catalyzes the transfer of the gamma-phosphate of ATP to D-galactose to form alpha-D-galactose-1-phosphate (Gal-1-P). The sequence is that of Galactokinase from Vibrio vulnificus (strain CMCP6).